The sequence spans 212 residues: Acyl-homoserine-lactone synthase (212 aa).

Belongs to the autoinducer synthase family.

It carries out the reaction a fatty acyl-[ACP] + S-adenosyl-L-methionine = an N-acyl-L-homoserine lactone + S-methyl-5'-thioadenosine + holo-[ACP] + H(+). Functionally, required for the synthesis of OHHL (N-(3-oxohexanoyl)-L-homoserine lactone), an autoinducer molecule which binds to the EchR transcriptional regulator. In Dickeya chrysanthemi (Pectobacterium chrysanthemi), this protein is Acyl-homoserine-lactone synthase (echI).